The chain runs to 263 residues: Endonuclease 8 (263 aa).

P2 acts as the Schiff-base intermediate with DNA in catalysis. E3 acts as the Proton donor in catalysis. Residue K53 is the Proton donor; for beta-elimination activity of the active site. 3 residues coordinate DNA: Q70, R125, and N169. The FPG-type zinc finger occupies 229–263 (KVFHREGKACERCGGVIERSTLSSRPFYGCPVCQK). R253 serves as the catalytic Proton donor; for delta-elimination activity.

This sequence belongs to the FPG family. Zn(2+) is required as a cofactor.

It carries out the reaction 2'-deoxyribonucleotide-(2'-deoxyribose 5'-phosphate)-2'-deoxyribonucleotide-DNA = a 3'-end 2'-deoxyribonucleotide-(2,3-dehydro-2,3-deoxyribose 5'-phosphate)-DNA + a 5'-end 5'-phospho-2'-deoxyribonucleoside-DNA + H(+). Its function is as follows. Involved in base excision repair of DNA damaged by oxidation or by mutagenic agents. Acts as a DNA glycosylase that recognizes and removes damaged bases. Has a preference for oxidized pyrimidines, such as thymine glycol, 5,6-dihydrouracil and 5,6-dihydrothymine. Has AP (apurinic/apyrimidinic) lyase activity and introduces nicks in the DNA strand. Cleaves the DNA backbone by beta-delta elimination to generate a single-strand break at the site of the removed base with both 3'- and 5'-phosphates. This chain is Endonuclease 8, found in Enterobacter sp. (strain 638).